The chain runs to 212 residues: tRNA (guanine-N(7)-)-methyltransferase (212 aa).

S-adenosyl-L-methionine is bound by residues E44, D69, D96, and D118. The active site involves D118. K122 contacts substrate. The segment at 124–129 is interaction with RNA; sequence RHEKRR. Substrate contacts are provided by residues D154 and 191–194; that span reads TEYE.

It belongs to the class I-like SAM-binding methyltransferase superfamily. TrmB family.

It carries out the reaction guanosine(46) in tRNA + S-adenosyl-L-methionine = N(7)-methylguanosine(46) in tRNA + S-adenosyl-L-homocysteine. It participates in tRNA modification; N(7)-methylguanine-tRNA biosynthesis. Functionally, catalyzes the formation of N(7)-methylguanine at position 46 (m7G46) in tRNA. The chain is tRNA (guanine-N(7)-)-methyltransferase from Streptococcus sanguinis (strain SK36).